The chain runs to 301 residues: MYSTKCIQKQAHKEGIWCCTWGENRNRNKQYIITGSLDNGLIAWEWTNSQLKCLYQFEGHRLGVISVDINSTGTLAASSSLDSQILLWDLETGRLTKTYDGDPADTWTIAFSPDSRFLATGSHTGCVNMINVQTAQKEGSIQLEGKFVYXLAYISDGSKLAAGTINGLVSICDLETGSVQFLDGHATPVRSVSFSPDGRLLASASDDKQIKVFDVRDGRLVIPSLNGHKGWVVSVDFASDNRHLVTASTDCSVRIWDLASKEEKHCFNTHEDQVWCARYSPQGNNIISVGDDRSIMIYQCA.

WD repeat units follow at residues 11–54 (AHKE…LKCL), 59–98 (GHRLGVISVDINSTGTLAASSSLDSQILLWDLETGRLTKT), 101–140 (GDPADTWTIAFSPDSRFLATGSHTGCVNMINVQTAQKEGS), 143–182 (LEGKFVYXLAYISDGSKLAAGTINGLVSICDLETGSVQFL), 184–223 (GHATPVRSVSFSPDGRLLASASDDKQIKVFDVRDGRLVIP), 227–266 (GHKGWVVSVDFASDNRHLVTASTDCSVRIWDLASKEEKHC), and 269–300 (THEDQVWCARYSPQGNNIISVGDDRSIMIYQC).

This Schistosoma mansoni (Blood fluke) protein is WD repeat-containing protein SL1-17.